We begin with the raw amino-acid sequence, 340 residues long: GTPase Obg (340 aa).

Positions 1–159 constitute an Obg domain; that stretch reads MKFLDQAKVY…RTLWLRLKLI (159 aa). The 168-residue stretch at 160–327 folds into the OBG-type G domain; sequence ADAGIIGLPN…LLRAGAHIIE (168 aa). GTP-binding positions include 166–173, 191–195, 212–215, 279–282, and 308–310; these read GLPNAGKS, FTTLY, DIPG, SQID, and SAV. Mg(2+) contacts are provided by S173 and T193.

It belongs to the TRAFAC class OBG-HflX-like GTPase superfamily. OBG GTPase family. In terms of assembly, monomer. It depends on Mg(2+) as a cofactor.

It localises to the cytoplasm. Its function is as follows. An essential GTPase which binds GTP, GDP and possibly (p)ppGpp with moderate affinity, with high nucleotide exchange rates and a fairly low GTP hydrolysis rate. Plays a role in control of the cell cycle, stress response, ribosome biogenesis and in those bacteria that undergo differentiation, in morphogenesis control. This chain is GTPase Obg, found in Bartonella henselae (strain ATCC 49882 / DSM 28221 / CCUG 30454 / Houston 1) (Rochalimaea henselae).